The following is a 207-amino-acid chain: Superoxide dismutase [Mn] (207 aa).

Residues histidine 28, histidine 76, aspartate 160, and histidine 164 each contribute to the Mn(2+) site.

Belongs to the iron/manganese superoxide dismutase family. Mn(2+) serves as cofactor.

The enzyme catalyses 2 superoxide + 2 H(+) = H2O2 + O2. Its function is as follows. Destroys superoxide anion radicals which are normally produced within the cells and which are toxic to biological systems. This Mycobacterium lepraemurium protein is Superoxide dismutase [Mn] (sodA).